Here is a 446-residue protein sequence, read N- to C-terminus: 3-phosphoshikimate 1-carboxyvinyltransferase (446 aa).

Residues Lys-21, Ser-22, and Arg-26 each coordinate 3-phosphoshikimate. Residue Lys-21 coordinates phosphoenolpyruvate. 2 residues coordinate phosphoenolpyruvate: Gly-94 and Arg-122. 3-phosphoshikimate is bound by residues Ser-167, Gln-169, Asp-315, and Lys-342. Gln-169 provides a ligand contact to phosphoenolpyruvate. Asp-315 serves as the catalytic Proton acceptor. Arg-346 and Arg-388 together coordinate phosphoenolpyruvate.

Belongs to the EPSP synthase family. In terms of assembly, monomer.

The protein localises to the cytoplasm. It catalyses the reaction 3-phosphoshikimate + phosphoenolpyruvate = 5-O-(1-carboxyvinyl)-3-phosphoshikimate + phosphate. The protein operates within metabolic intermediate biosynthesis; chorismate biosynthesis; chorismate from D-erythrose 4-phosphate and phosphoenolpyruvate: step 6/7. Functionally, catalyzes the transfer of the enolpyruvyl moiety of phosphoenolpyruvate (PEP) to the 5-hydroxyl of shikimate-3-phosphate (S3P) to produce enolpyruvyl shikimate-3-phosphate and inorganic phosphate. This chain is 3-phosphoshikimate 1-carboxyvinyltransferase, found in Alkalilimnicola ehrlichii (strain ATCC BAA-1101 / DSM 17681 / MLHE-1).